The sequence spans 115 residues: U3-lycotoxin-Ls1q (115 aa).

An N-terminal signal peptide occupies residues 1-20 (MKFVLLFGVLLVTLFSYSSA). A propeptide spanning residues 21-44 (EMFDDFDQADEDELLSLIEKEEAR) is cleaved from the precursor. Intrachain disulfides connect cysteine 48-cysteine 63, cysteine 55-cysteine 72, cysteine 62-cysteine 87, and cysteine 74-cysteine 85.

Belongs to the neurotoxin 19 (CSTX) family. 01 subfamily. Expressed by the venom gland.

The protein resides in the secreted. In Lycosa singoriensis (Wolf spider), this protein is U3-lycotoxin-Ls1q.